A 185-amino-acid chain; its full sequence is Lactoylglutathione lyase (185 aa).

The segment at 1 to 22 (MASEARESPANNPGLSTNRDEA) is disordered. One can recognise a VOC domain in the interval 27–174 (IMQQTMFRIK…DGYWIEIFDL (148 aa)). Substrate contacts are provided by Gln-30 and Arg-34. Gln-30 provides a ligand contact to Zn(2+). A Zn(2+)-binding site is contributed by Glu-96. Substrate is bound by residues Asn-100, Arg-120, His-124, and 154 to 155 (KM). Position 124 (His-124) interacts with Zn(2+). Position 170 (Glu-170) interacts with Zn(2+). Catalysis depends on Glu-170, which acts as the Proton donor/acceptor.

The protein belongs to the glyoxalase I family. It depends on Zn(2+) as a cofactor.

It carries out the reaction (R)-S-lactoylglutathione = methylglyoxal + glutathione. It functions in the pathway secondary metabolite metabolism; methylglyoxal degradation; (R)-lactate from methylglyoxal: step 1/2. In terms of biological role, catalyzes the conversion of hemimercaptal, formed from methylglyoxal and glutathione, to S-lactoylglutathione. The protein is Lactoylglutathione lyase of Arabidopsis thaliana (Mouse-ear cress).